A 206-amino-acid chain; its full sequence is TPR repeat-containing protein YrrB (206 aa).

6 TPR repeats span residues 1 to 23 (MQEG…NKED), 24 to 57 (AIPY…DSSA), 59 to 91 (TAYY…GMEN), 93 to 125 (DLFY…NEND), 127 to 159 (EARF…DPGH), and 160 to 193 (ADAF…QPDH).

Monomer.

Could be an interacting mediator in the complex formation among RNA sulfuration components, RNA processing components, and aminoacyl-tRNA synthetases. The chain is TPR repeat-containing protein YrrB (yrrB) from Bacillus subtilis (strain 168).